A 387-amino-acid polypeptide reads, in one-letter code: Erythronate-4-phosphate dehydrogenase (387 aa).

Substrate contacts are provided by S45 and T67. Residue D147 participates in NAD(+) binding. R208 is an active-site residue. D232 serves as a coordination point for NAD(+). Residue E237 is part of the active site. The Proton donor role is filled by H254. Residue G257 coordinates NAD(+). Substrate is bound at residue Y258.

It belongs to the D-isomer specific 2-hydroxyacid dehydrogenase family. PdxB subfamily. Homodimer.

It localises to the cytoplasm. The enzyme catalyses 4-phospho-D-erythronate + NAD(+) = (R)-3-hydroxy-2-oxo-4-phosphooxybutanoate + NADH + H(+). Its pathway is cofactor biosynthesis; pyridoxine 5'-phosphate biosynthesis; pyridoxine 5'-phosphate from D-erythrose 4-phosphate: step 2/5. Functionally, catalyzes the oxidation of erythronate-4-phosphate to 3-hydroxy-2-oxo-4-phosphonooxybutanoate. The sequence is that of Erythronate-4-phosphate dehydrogenase from Shewanella sediminis (strain HAW-EB3).